The chain runs to 502 residues: Cytochrome P450 monooxygenase orf6 (502 aa).

Residues 3–25 (ALWVLAVALVAYFLCLSIYRLFL) form a helical membrane-spanning segment. Residue Asn382 is glycosylated (N-linked (GlcNAc...) asparagine). Cys445 serves as a coordination point for heme.

It belongs to the cytochrome P450 family. Heme is required as a cofactor.

It localises to the membrane. It participates in mycotoxin biosynthesis. Functionally, cytochrome P450 monooxygenase; part of the gene cluster that mediates the biosynthesis of brefeldin A (BFA), a protein transport inhibitor that shows antiviral, antifungal, and antitumor properties. The proposed biosynthesis of BFA involves formation of an acyclic polyketide chain that is differentially tailored throughout the backbone. The highly reducing polyketide synthase Bref-PKS is proposed to synthesize the precisely reduced octaketide precursor, which could then be directly offloaded by the thiohydrolase enzyme Bref-TH followed by a cytochrome P450 monooxygenase-mediated formation of the cyclopentane ring and macrocyclization to afford 7-deoxy BFA. Alternatively, the first ring annulation can also occur on the ACP-tethered intermediate before the thiohydrolase release and lactonization. The C7-hydroxylation by another cytochrome P450 monooxygenase is believed to be the final step in the process to obtain the final structure of BFA. In addition to the HRPKS Bref-PKS and the thiohydrolase Bref-TH, the brefeldin A biosynthesis cluster contains 4 cytochrome p450 monooxygenases (called orf3 to orf6), as well a the probable cluster-specific transcription regulator orf8. The protein is Cytochrome P450 monooxygenase orf6 of Eupenicillium brefeldianum (Penicillium brefeldianum).